The following is a 130-amino-acid chain: MKLAFLFLGPMALLLLAGYGCVLGASSGNLRTFVGCAVREFTFLAKKPGCRGLRITTDACWGRCETWEKPILEPPYIEAHHRVCTYNETKQVTVKLPNCAPGVDPFYTYPVAIRCDCGACSTATTECETI.

Positions 1 to 24 are cleaved as a signal peptide; the sequence is MKLAFLFLGPMALLLLAGYGCVLG. Cystine bridges form between C36/C84, C50/C99, C60/C115, C64/C117, and C120/C127. N87 carries an N-linked (GlcNAc...) asparagine glycan.

Belongs to the glycoprotein hormones subunit beta family. In terms of assembly, heterodimer with GPHA2; this heterodimer interacts with thyroid-stimulating hormone receptor (TSHR), and hence stimulates cAMP production. In terms of processing, N-glycosylated. In terms of tissue distribution, highly expressed in brain and at low levels in pituitary. Also found in retina, testis and skin but not in pancreas, parotid, kidney, stomach, liver, colon, small intestine, thyroid, brain or adrenal gland. In pituitary, colocalizes with ACTH, suggesting that it is located in corticotrophs.

The protein resides in the secreted. Functions as a heterodimeric glycoprotein hormone with GPHA2 able to bind and activate the thyroid-stimulating hormone receptor (TSHR), leading to increased cAMP production. Plays a central role in controlling thyroid cell metabolism. This Homo sapiens (Human) protein is Glycoprotein hormone beta-5 (GPHB5).